Consider the following 381-residue polypeptide: Probable 26S proteasome regulatory subunit rpn9 (381 aa).

In terms of domain architecture, PCI spans 177–343; the sequence is QYYRHCLLYL…QIVTISSVQS (167 aa).

The protein belongs to the proteasome subunit S11 family.

Acts as a regulatory subunit of the 26S proteasome which is involved in the ATP-dependent degradation of ubiquitinated proteins. The protein is Probable 26S proteasome regulatory subunit rpn9 (rpn9) of Schizosaccharomyces pombe (strain 972 / ATCC 24843) (Fission yeast).